We begin with the raw amino-acid sequence, 275 residues long: Putative hydro-lyase SPO1111 (275 aa).

The protein belongs to the D-glutamate cyclase family.

The chain is Putative hydro-lyase SPO1111 from Ruegeria pomeroyi (strain ATCC 700808 / DSM 15171 / DSS-3) (Silicibacter pomeroyi).